A 119-amino-acid chain; its full sequence is Large ribosomal subunit protein uL22 (119 aa).

The protein belongs to the universal ribosomal protein uL22 family. Part of the 50S ribosomal subunit.

In terms of biological role, this protein binds specifically to 23S rRNA; its binding is stimulated by other ribosomal proteins, e.g. L4, L17, and L20. It is important during the early stages of 50S assembly. It makes multiple contacts with different domains of the 23S rRNA in the assembled 50S subunit and ribosome. Functionally, the globular domain of the protein is located near the polypeptide exit tunnel on the outside of the subunit, while an extended beta-hairpin is found that lines the wall of the exit tunnel in the center of the 70S ribosome. The polypeptide is Large ribosomal subunit protein uL22 (Chlorobium phaeovibrioides (strain DSM 265 / 1930) (Prosthecochloris vibrioformis (strain DSM 265))).